We begin with the raw amino-acid sequence, 114 residues long: Protein S100-A9 (114 aa).

Residue Thr2 is modified to Blocked amino end (Thr). Cys3 carries the S-nitrosocysteine; transient modification. 2 consecutive EF-hand domains span residues 12-47 (IETIINTFHQYSVKLGHPDTLNQGEFKELVRKDLQN) and 54-89 (KNEKVIEHIMEDLDTNADKQLSFEEFIMLMARLTWA). His20 contributes to the Zn(2+) binding site. The Ca(2+) site is built by Ser23, Leu26, and His28. Zn(2+) is bound at residue Asp30. Ca(2+) is bound by residues Thr31, Glu36, Asp67, Asn69, Asp71, Gln73, and Glu78. Positions 91 and 95 each coordinate Zn(2+). The span at 93–102 (KMHEGDEGPG) shows a compositional bias: basic and acidic residues. The segment at 93 to 114 (KMHEGDEGPGHHHKPGLGEGTP) is disordered. A Pros-methylhistidine modification is found at His105. Thr113 carries the phosphothreonine; by MAPK14 modification.

As to quaternary structure, homodimer. Preferentially exists as a heterodimer or heterotetramer with S100A8 known as calprotectin (S100A8/A9). S100A9 interacts with ATP2A2. S100A9 interacts with AGER, and with the heterodimeric complex formed by TLR4 and LY96 in the presence of calcium and/or zinc ions. S100A9 binds quinoline-3-carboxamides in the presence of calcium and/or zinc ions. S100A9 interacts with amyloid-beta protein 40. Calprotectin (S100A8/9) interacts with CEACAM3 and tubulin filaments in a calcium-dependent manner. Heterotetrameric calprotectin (S100A8/A9) interacts with ANXA6 and associates with tubulin filaments in activated monocytes. Calprotectin (S100A8/9) interacts with NCF2/P67PHOX, RAC1, RAC2, CYBA and CYBB. Calprotectin (S100A8/9) interacts with NOS2 to form the iNOS-S100A8/A9 transnitrosylase complex; induced by LDL(ox). Calprotectin (S100A8/9) interacts with CD69. Phosphorylated. Phosphorylation inhibits activation of tubulin polymerization. In terms of processing, S-nitrosylation of Cys-3 is implicated in LDL(ox)-induced S-nitrosylation of GAPDH at 'Cys-247' through a transnitrosylase mechanism involving a iNOS-S100A8/9 complex. Post-translationally, methylation at His-105 by METTL9 reduces zinc-binding without affecting heterodimerization with S100A8. As to expression, calprotectin (S100A8/9) is predominantly expressed in myeloid cells. Except for inflammatory conditions, the expression is restricted to a specific stage of myeloid differentiation since both proteins are expressed in circulating neutrophils and monocytes but are absent in normal tissue macrophages and lymphocytes. Under chronic inflammatory conditions, such as psoriasis and malignant disorders, also expressed in the epidermis. Found in high concentrations at local sites of inflammation or in the serum of patients with inflammatory diseases such as rheumatoid, cystic fibrosis, inflammatory bowel disease, Crohn's disease, giant cell arteritis, cystic fibrosis, Sjogren's syndrome, systemic lupus erythematosus, and progressive systemic sclerosis. Involved in the formation and deposition of amyloids in the aging prostate known as corpora amylacea inclusions. Strongly up-regulated in many tumors, including gastric, esophageal, colon, pancreatic, bladder, ovarian, thyroid, breast and skin cancers.

It localises to the secreted. It is found in the cytoplasm. Its subcellular location is the cytoskeleton. The protein resides in the cell membrane. Functionally, S100A9 is a calcium- and zinc-binding protein which plays a prominent role in the regulation of inflammatory processes and immune response. It can induce neutrophil chemotaxis, adhesion, can increase the bactericidal activity of neutrophils by promoting phagocytosis via activation of SYK, PI3K/AKT, and ERK1/2 and can induce degranulation of neutrophils by a MAPK-dependent mechanism. Predominantly found as calprotectin (S100A8/A9) which has a wide plethora of intra- and extracellular functions. The intracellular functions include: facilitating leukocyte arachidonic acid trafficking and metabolism, modulation of the tubulin-dependent cytoskeleton during migration of phagocytes and activation of the neutrophilic NADPH-oxidase. Also participates in regulatory T-cell differentiation together with CD69. Activates NADPH-oxidase by facilitating the enzyme complex assembly at the cell membrane, transferring arachidonic acid, an essential cofactor, to the enzyme complex and S100A8 contributes to the enzyme assembly by directly binding to NCF2/P67PHOX. The extracellular functions involve pro-inflammatory, antimicrobial, oxidant-scavenging and apoptosis-inducing activities. Its pro-inflammatory activity includes recruitment of leukocytes, promotion of cytokine and chemokine production, and regulation of leukocyte adhesion and migration. Acts as an alarmin or a danger associated molecular pattern (DAMP) molecule and stimulates innate immune cells via binding to pattern recognition receptors such as Toll-like receptor 4 (TLR4) and receptor for advanced glycation endproducts (AGER). Binding to TLR4 and AGER activates the MAP-kinase and NF-kappa-B signaling pathways resulting in the amplification of the pro-inflammatory cascade. Has antimicrobial activity towards bacteria and fungi and exerts its antimicrobial activity probably via chelation of Zn(2+) which is essential for microbial growth. Can induce cell death via autophagy and apoptosis and this occurs through the cross-talk of mitochondria and lysosomes via reactive oxygen species (ROS) and the process involves BNIP3. Can regulate neutrophil number and apoptosis by an anti-apoptotic effect; regulates cell survival via ITGAM/ITGB and TLR4 and a signaling mechanism involving MEK-ERK. Its role as an oxidant scavenger has a protective role in preventing exaggerated tissue damage by scavenging oxidants. Can act as a potent amplifier of inflammation in autoimmunity as well as in cancer development and tumor spread. Has transnitrosylase activity; in oxidatively-modified low-densitity lipoprotein (LDL(ox))-induced S-nitrosylation of GAPDH on 'Cys-247' proposed to transfer the NO moiety from NOS2/iNOS to GAPDH via its own S-nitrosylated Cys-3. The iNOS-S100A8/A9 transnitrosylase complex is proposed to also direct selective inflammatory stimulus-dependent S-nitrosylation of multiple targets such as ANXA5, EZR, MSN and VIM by recognizing a [IL]-x-C-x-x-[DE] motif. The protein is Protein S100-A9 of Homo sapiens (Human).